We begin with the raw amino-acid sequence, 544 residues long: Protein angel homolog 2 (544 aa).

This sequence belongs to the CCR4/nocturin family.

This Mus musculus (Mouse) protein is Protein angel homolog 2 (Angel2).